The primary structure comprises 365 residues: Peptide chain release factor 2 (365 aa).

Glutamine 251 is subject to N5-methylglutamine.

This sequence belongs to the prokaryotic/mitochondrial release factor family. Post-translationally, methylated by PrmC. Methylation increases the termination efficiency of RF2.

It localises to the cytoplasm. Peptide chain release factor 2 directs the termination of translation in response to the peptide chain termination codons UGA and UAA. This chain is Peptide chain release factor 2, found in Neorickettsia sennetsu (strain ATCC VR-367 / Miyayama) (Ehrlichia sennetsu).